We begin with the raw amino-acid sequence, 101 residues long: Iron-sulfur cluster assembly protein CyaY (101 aa).

The protein belongs to the frataxin family.

Its function is as follows. Involved in iron-sulfur (Fe-S) cluster assembly. May act as a regulator of Fe-S biogenesis. This is Iron-sulfur cluster assembly protein CyaY from Rickettsia felis (strain ATCC VR-1525 / URRWXCal2) (Rickettsia azadi).